We begin with the raw amino-acid sequence, 229 residues long: DNA mismatch repair protein MutH (229 aa).

The protein belongs to the MutH family.

It localises to the cytoplasm. Its function is as follows. Sequence-specific endonuclease that cleaves unmethylated GATC sequences. It is involved in DNA mismatch repair. The chain is DNA mismatch repair protein MutH from Shigella boydii serotype 18 (strain CDC 3083-94 / BS512).